Here is a 388-residue protein sequence, read N- to C-terminus: MTGMTTDADLRELTVGTGAGGEQLGTDMVLNIGPQHPSTHGVLRLRLVLDGERVVSAEPVVGYMHRGAEKLFEVRDYRQIIVLANRHDWLSAFANELGVVLAVERLLGMEVPERATWLRMALAELNRVLNHLMFLGSYPLEIGAITPMFYAFRERETLQTALEEVSGGRIHYMFNRVGGLKEEVPAGWTGRARAAIGEVRRSLPDLDNLIRRNEIFLARTVGVGVLSAAQAAAYGASGPVARASGLDLDLRRDEPYLAYDQLDVPVVTRTAGDCHSRFEVLLDQVYVSLDLAEQCLDRVDRLTGPINTRLPKVLKAPEGHTYAWTENPLGINGYYLVSRGEKTPWRLKLRTASYANVQALATLLPGCLVPDLVAILGSMFFVVGDIDK.

Belongs to the complex I 49 kDa subunit family. As to quaternary structure, NDH-1 is composed of 14 different subunits. Subunits NuoB, C, D, E, F, and G constitute the peripheral sector of the complex.

Its subcellular location is the cell membrane. It catalyses the reaction a quinone + NADH + 5 H(+)(in) = a quinol + NAD(+) + 4 H(+)(out). In terms of biological role, NDH-1 shuttles electrons from NADH, via FMN and iron-sulfur (Fe-S) centers, to quinones in the respiratory chain. The immediate electron acceptor for the enzyme in this species is believed to be a menaquinone. Couples the redox reaction to proton translocation (for every two electrons transferred, four hydrogen ions are translocated across the cytoplasmic membrane), and thus conserves the redox energy in a proton gradient. The protein is NADH-quinone oxidoreductase subunit D 2 of Salinispora tropica (strain ATCC BAA-916 / DSM 44818 / JCM 13857 / NBRC 105044 / CNB-440).